Consider the following 218-residue polypeptide: Large ribosomal subunit protein uL3 (218 aa).

The tract at residues 127–167 (GFSRGPMSHGSKNHRLPGSIGAGTTPGRVYPGKRMAGRMGG) is disordered.

The protein belongs to the universal ribosomal protein uL3 family. Part of the 50S ribosomal subunit. Forms a cluster with proteins L14 and L19.

One of the primary rRNA binding proteins, it binds directly near the 3'-end of the 23S rRNA, where it nucleates assembly of the 50S subunit. The protein is Large ribosomal subunit protein uL3 of Prochlorococcus marinus (strain NATL1A).